Consider the following 268-residue polypeptide: 3-methyl-2-oxobutanoate hydroxymethyltransferase (268 aa).

Mg(2+) is bound by residues aspartate 46 and aspartate 85. 3-methyl-2-oxobutanoate contacts are provided by residues 46-47 (DS), aspartate 85, and lysine 115. Glutamate 117 is a binding site for Mg(2+). The active-site Proton acceptor is glutamate 184.

This sequence belongs to the PanB family. In terms of assembly, homodecamer; pentamer of dimers. Mg(2+) is required as a cofactor.

The protein localises to the cytoplasm. It carries out the reaction 3-methyl-2-oxobutanoate + (6R)-5,10-methylene-5,6,7,8-tetrahydrofolate + H2O = 2-dehydropantoate + (6S)-5,6,7,8-tetrahydrofolate. The protein operates within cofactor biosynthesis; (R)-pantothenate biosynthesis; (R)-pantoate from 3-methyl-2-oxobutanoate: step 1/2. Functionally, catalyzes the reversible reaction in which hydroxymethyl group from 5,10-methylenetetrahydrofolate is transferred onto alpha-ketoisovalerate to form ketopantoate. This chain is 3-methyl-2-oxobutanoate hydroxymethyltransferase, found in Magnetococcus marinus (strain ATCC BAA-1437 / JCM 17883 / MC-1).